We begin with the raw amino-acid sequence, 451 residues long: MGKYFGTDGVRGVANQELTPELAFKLGRYGGYVLAHNKGEKHPRVLVGRDTRVSGEMLESALIAGLISIGAEVMRLGIISTPGVAYLTRDMGAELGVMISASHNPVADNGIKFFGSDGFKLSDEQENEIEALLDQENPELPRPVGNDIVHYSDYFEGAQKYLSYLKSTVDVNFEGLKIVLDGANGSTSSLAPFLFGDLEADTETIGCSPDGYNINEKCGSTHPEKLAEKVVETESDFGLAFDGDGDRIIAVDENGQIVDGDQIMFIIGQEMHKNQELNNDMIVSTVMSNLGFYKALEQEGIKSNKTKVGDRYVVEEMRRGNYNLGGEQSGHIVMMDYNTTGDGLLTGIQLASVIKMTGKSLSELAGQMKKYPQSLINVRVTDKYRVEENVDVKEVMTKVEVEMNGEGRILVRPSGTEPLVRVMVEAATDEDAERYAQQIADVVQDKMGLDK.

The active-site Phosphoserine intermediate is the S102. Mg(2+) is bound by residues S102, D242, D244, and D246. S102 carries the post-translational modification Phosphoserine.

The protein belongs to the phosphohexose mutase family. The cofactor is Mg(2+). In terms of processing, activated by phosphorylation.

The catalysed reaction is alpha-D-glucosamine 1-phosphate = D-glucosamine 6-phosphate. Catalyzes the conversion of glucosamine-6-phosphate to glucosamine-1-phosphate. The polypeptide is Phosphoglucosamine mutase (Staphylococcus aureus (strain bovine RF122 / ET3-1)).